Here is a 266-residue protein sequence, read N- to C-terminus: Mitochondrial intermembrane space import and assembly protein 40 (266 aa).

The transit peptide at 1 to 28 (MFRQVSVRALRRAAGRSVCASRAQMVRH) directs the protein to the mitochondrion. Residues 29-44 (SSTLGGGKGSYNLDMP) are Mitochondrial matrix-facing. A helical; Signal-anchor for type II membrane protein transmembrane segment spans residues 45-61 (ALALAAGVTLLAGYMVY). The Mitochondrial intermembrane segment spans residues 62–266 (PRAPKAKQAA…AESAKSDEGH (205 aa)). The segment covering 87–98 (ASLQASAPVQAT) has biased composition (polar residues). Positions 87–180 (ASLQASAPVQ…GQQGAYNPDT (94 aa)) are disordered. Composition is skewed to low complexity over residues 130–157 (AEVG…AAEA) and 165–175 (AGEAAQGQQGA). Disulfide bonds link Cys187–Cys189, Cys198–Cys231, and Cys208–Cys221. One can recognise a CHCH domain in the interval 195-239 (HGPCGEEFKAAFACFVYSEAEPKGIDCVEKFQVMQDCFRQHPEHY). 2 consecutive short sequence motifs (cx9C motif) follow at residues 198 to 208 (CGEEFKAAFAC) and 221 to 231 (CVEKFQVMQDC). The segment at 242-266 (QLESEEQAVRETEAAAESAKSDEGH) is disordered. Residues 248-266 (QAVRETEAAAESAKSDEGH) show a composition bias toward basic and acidic residues.

In terms of assembly, monomer. Cu(2+) is required as a cofactor. It depends on Zn(2+) as a cofactor.

The protein resides in the mitochondrion inner membrane. In terms of biological role, required for the import and folding of small cysteine-containing proteins (small Tim) in the mitochondrial intermembrane space (IMS). Forms a redox cycle with ERV1 that involves a disulfide relay system. Precursor proteins to be imported into the IMS are translocated in their reduced form into the mitochondria. The oxidized form of MIA40 forms a transient intermolecular disulfide bridge with the reduced precursor protein, resulting in oxidation of the precursor protein that now contains an intramolecular disulfide bond and is able to undergo folding in the IMS. In Eremothecium gossypii (strain ATCC 10895 / CBS 109.51 / FGSC 9923 / NRRL Y-1056) (Yeast), this protein is Mitochondrial intermembrane space import and assembly protein 40 (MIA40).